The following is a 66-amino-acid chain: Large ribosomal subunit protein uL29 (66 aa).

Belongs to the universal ribosomal protein uL29 family.

In Hydrogenobaculum sp. (strain Y04AAS1), this protein is Large ribosomal subunit protein uL29.